The primary structure comprises 511 residues: Maturase K (511 aa).

The protein belongs to the intron maturase 2 family. MatK subfamily.

Its subcellular location is the plastid. It localises to the chloroplast. Functionally, usually encoded in the trnK tRNA gene intron. Probably assists in splicing its own and other chloroplast group II introns. This is Maturase K from Bromelia plumieri (Karatas).